The chain runs to 432 residues: Amino-acid acetyltransferase (432 aa).

Residues 286–425 (EKLREATIED…ASLYNYQRQS (140 aa)) form the N-acetyltransferase domain.

It belongs to the acetyltransferase family. ArgA subfamily.

Its subcellular location is the cytoplasm. It carries out the reaction L-glutamate + acetyl-CoA = N-acetyl-L-glutamate + CoA + H(+). Its pathway is amino-acid biosynthesis; L-arginine biosynthesis; N(2)-acetyl-L-ornithine from L-glutamate: step 1/4. The sequence is that of Amino-acid acetyltransferase from Azotobacter vinelandii (strain DJ / ATCC BAA-1303).